Reading from the N-terminus, the 748-residue chain is MLLQFRAKTFFNNIAQDSLVTLITKRVGLGYRFLSSLCQPKNTALDSEGYKILFQTAAKSGSVVLGKLAHGHMIKSSLNPCLYLLNNLLNMYCKCRELGFARQLFDRMPERNIISFNSLISGYTQMGFYEQAMELFLEAREANLKLDKFTYAGALGFCGERCDLDLGELLHGLVVVNGLSQQVFLINVLIDMYSKCGKLDQAMSLFDRCDERDQVSWNSLISGYVRVGAAEEPLNLLAKMHRDGLNLTTYALGSVLKACCINLNEGFIEKGMAIHCYTAKLGMEFDIVVRTALLDMYAKNGSLKEAIKLFSLMPSKNVVTYNAMISGFLQMDEITDEASSEAFKLFMDMQRRGLEPSPSTFSVVLKACSAAKTLEYGRQIHALICKNNFQSDEFIGSALIELYALMGSTEDGMQCFASTSKQDIASWTSMIDCHVQNEQLESAFDLFRQLFSSHIRPEEYTVSLMMSACADFAALSSGEQIQGYAIKSGIDAFTSVKTSSISMYAKSGNMPLANQVFIEVQNPDVATYSAMISSLAQHGSANEALNIFESMKTHGIKPNQQAFLGVLIACCHGGLVTQGLKYFQCMKNDYRINPNEKHFTCLVDLLGRTGRLSDAENLILSSGFQDHPVTWRALLSSCRVYKDSVIGKRVAERLMELEPEASGSYVLLHNIYNDSGVNSSAEEVRELMRDRGVKKEPALSWIVIGNQTHSFAVADLSHPSSQMIYTMLETMDNVDFVDYTLVHFCSVT.

PPR repeat units lie at residues 46-80, 81-111, 112-146, 147-181, 182-212, 213-247, 248-285, 286-316, 317-356, 357-391, 392-422, 423-457, 458-492, 493-523, 524-558, 559-589, and 595-629; these read DSEG…SLNP, CLYL…MPER, NIIS…NLKL, DKFT…GLSQ, QVFL…CDER, DQVS…GLNL, TTYA…GMEF, DIVV…MPSK, NVVT…GLEP, SPST…NFQS, DEFI…TSKQ, DIAS…HIRP, EEYT…GIDA, FTSV…VQNP, DVAT…GIKP, NQQA…MKND, and NEKH…DHPV. The type E motif stretch occupies residues 630-705; the sequence is TWRALLSSCR…EPALSWIVIG (76 aa). The segment at 706–736 is type E(+) motif; the sequence is NQTHSFAVADLSHPSSQMIYTMLETMDNVDF.

Belongs to the PPR family. PCMP-E subfamily.

The sequence is that of Pentatricopeptide repeat-containing protein At3g13880 (PCMP-E89) from Arabidopsis thaliana (Mouse-ear cress).